The primary structure comprises 31 residues: MLTITSYFGFLLAALTITPALFIGLNKIRLI.

A helical membrane pass occupies residues 4 to 24 (ITSYFGFLLAALTITPALFIG).

This sequence belongs to the PetL family. As to quaternary structure, the 4 large subunits of the cytochrome b6-f complex are cytochrome b6, subunit IV (17 kDa polypeptide, PetD), cytochrome f and the Rieske protein, while the 4 small subunits are PetG, PetL, PetM and PetN. The complex functions as a dimer.

Its subcellular location is the plastid. It localises to the chloroplast thylakoid membrane. Component of the cytochrome b6-f complex, which mediates electron transfer between photosystem II (PSII) and photosystem I (PSI), cyclic electron flow around PSI, and state transitions. PetL is important for photoautotrophic growth as well as for electron transfer efficiency and stability of the cytochrome b6-f complex. The protein is Cytochrome b6-f complex subunit 6 of Saccharum barberi (Indian sugarcane).